A 602-amino-acid chain; its full sequence is FAD-binding monooxygenase hmp7 (602 aa).

FAD contacts are provided by residues 108–111 (TWYW), 120–121 (DV), and Tyr126. Residue 118–120 (QCD) participates in NADP(+) binding. Residues 252–258 (TGATAVQ) and 275–276 (RT) each bind NADP(+).

The protein belongs to the FAD-binding monooxygenase family. FAD is required as a cofactor.

It functions in the pathway secondary metabolite biosynthesis. In terms of biological role, FAD-binding monooxygenase; part of the gene cluster that mediates the biosynthesis of hypothemycin, a resorcylic acid lactone (RAL) that irreversibly inhibits a subset of protein kinases with a conserved cysteine in the ATP binding site such as human ERK2. The first step is performed by both PKSs hmp3 and hmp8 and leads to the production of 7',8'-dehydrozearalenol (DHZ). The highly reducing PKS hpm8 synthesizes the reduced hexaketide (7S,11S,2E,8E)-7,11-dihydroxy-dodeca-2,8-dienoate, which is transferred downstream to the non-reducing PKS hpm3. Hpm3 then extends the reduced hexaketide to a nonaketide, after which regioselective cyclization and macrolactonization affords DHZ. The next step is the conversion of DHZ into aigialomycin C and is performed by the O-methyltransferase hmp5, the FAD-binding monooxygenase hmp7, and the cytochrome P450 monooxygenase hmp1. The wide substrate tolerance of the hmp5 and hmp7 implies that the reactions from DHZ to aigialomycin C can occur in any order. The steps from aigialomycin C to hypothemycin are less well established. The FAD-linked oxidoreductase hmp9 presumably catalyzes oxidation of the C-6' hydroxyl to a ketone. The timing of this oxidation is important, since the resulting enone functional group is a Michael acceptor that can react spontaneously with glutathione, an abundant metabolite in fungal cells. The glutathione S-transferase hmp2 catalyzes cis-trans isomerization of the 7',8' double bond with equilibrium favoring the trans isomer. The hpm6-encoded transporter might preferentially pump hypothemycin out of the cell relative to the trans isomer aigialomycin A. The cis-to-trans isomerization may be coupled with C-4' hydroxylation, since all known hypothemycin analogs containing the enone functional group also have hydroxyl groups at both C-4' and C-5'. This is FAD-binding monooxygenase hmp7 from Hypomyces subiculosus (Nectria subiculosa).